Here is a 147-residue protein sequence, read N- to C-terminus: Large ribosomal subunit protein uL13 (147 aa).

The protein belongs to the universal ribosomal protein uL13 family. Part of the 50S ribosomal subunit.

In terms of biological role, this protein is one of the early assembly proteins of the 50S ribosomal subunit, although it is not seen to bind rRNA by itself. It is important during the early stages of 50S assembly. This is Large ribosomal subunit protein uL13 from Limosilactobacillus fermentum (strain NBRC 3956 / LMG 18251) (Lactobacillus fermentum).